A 523-amino-acid polypeptide reads, in one-letter code: Fidgetin-like protein 1 (523 aa).

Residues 114 to 154 are disordered; that stretch reads PVQQAVKSRPEGQFPESRNNSTKKIDAQQYSSESSSQSGFG. The span at 141 to 151 shows a compositional bias: low complexity; it reads QQYSSESSSQS. ATP contacts are provided by residues A253 and 293–298; that span reads GTGKTL.

Belongs to the AAA ATPase family. As to quaternary structure, hexamer. Mg(2+) is required as a cofactor.

It catalyses the reaction ATP + H2O = ADP + phosphate + H(+). The protein is Fidgetin-like protein 1 of Drosophila melanogaster (Fruit fly).